Reading from the N-terminus, the 278-residue chain is Tryptophan synthase alpha chain (278 aa).

Active-site proton acceptor residues include E50 and D61.

It belongs to the TrpA family. In terms of assembly, tetramer of two alpha and two beta chains.

The catalysed reaction is (1S,2R)-1-C-(indol-3-yl)glycerol 3-phosphate + L-serine = D-glyceraldehyde 3-phosphate + L-tryptophan + H2O. The protein operates within amino-acid biosynthesis; L-tryptophan biosynthesis; L-tryptophan from chorismate: step 5/5. Its function is as follows. The alpha subunit is responsible for the aldol cleavage of indoleglycerol phosphate to indole and glyceraldehyde 3-phosphate. The protein is Tryptophan synthase alpha chain of Nitrobacter winogradskyi (strain ATCC 25391 / DSM 10237 / CIP 104748 / NCIMB 11846 / Nb-255).